A 593-amino-acid chain; its full sequence is DNA primase (593 aa).

The segment at 38–62 (CPFHQEKTPSFTVSDSKRFFYCFGC) adopts a CHC2-type zinc-finger fold. One can recognise a Toprim domain in the interval 250–332 (NRSILVEGYF…EKKISFIRLP (83 aa)). E256, D300, and D302 together coordinate Mg(2+).

The protein belongs to the DnaG primase family. In terms of assembly, monomer. Interacts with DnaB. It depends on Zn(2+) as a cofactor. Requires Mg(2+) as cofactor.

It carries out the reaction ssDNA + n NTP = ssDNA/pppN(pN)n-1 hybrid + (n-1) diphosphate.. RNA polymerase that catalyzes the synthesis of short RNA molecules used as primers for DNA polymerase during DNA replication. In Rickettsia typhi (strain ATCC VR-144 / Wilmington), this protein is DNA primase.